The sequence spans 85 residues: U4-theraphotoxin-Hhn1f (85 aa).

An N-terminal signal peptide occupies residues 1–22; the sequence is MKVTLIAILTCAAVLVLHTTAA. Residues 23–48 constitute a propeptide that is removed on maturation; the sequence is EELEAESQLMEVGMPDTELAAVDEER. Cysteine 71 and cysteine 82 are disulfide-bonded.

It belongs to the neurotoxin 12 (Hwtx-2) family. 02 (Hwtx-2) subfamily. As to expression, expressed by the venom gland.

The protein resides in the secreted. Functionally, postsynaptic neurotoxin. The sequence is that of U4-theraphotoxin-Hhn1f from Cyriopagopus hainanus (Chinese bird spider).